Here is a 1261-residue protein sequence, read N- to C-terminus: Mediator of RNA polymerase II transcription subunit 14 (1261 aa).

A compositionally biased stretch (basic and acidic residues) spans 1–11; that stretch reads MPNGKQQHEVT. 3 disordered regions span residues 1–21, 413–435, and 1193–1220; these read MPNG…EIPH, NETA…GETE, and DNDI…ENET. A compositionally biased stretch (acidic residues) spans 417–427; it reads IVDDNDNDNDD. The span at 1205 to 1220 shows a compositional bias: basic and acidic residues; the sequence is QNEKENSKTTSKENET.

Belongs to the Mediator complex subunit 14 family. In terms of assembly, component of the Mediator complex.

It localises to the nucleus. Functionally, component of the Mediator complex, a coactivator involved in the regulated transcription of nearly all RNA polymerase II-dependent genes. Mediator functions as a bridge to convey information from gene-specific regulatory proteins to the basal RNA polymerase II transcription machinery. Mediator is recruited to promoters by direct interactions with regulatory proteins and serves as a scaffold for the assembly of a functional preinitiation complex with RNA polymerase II and the general transcription factors. The chain is Mediator of RNA polymerase II transcription subunit 14 (MED14) from Candida albicans (strain SC5314 / ATCC MYA-2876) (Yeast).